We begin with the raw amino-acid sequence, 370 residues long: tRNA-specific 2-thiouridylase MnmA (370 aa).

Residues 24-31 (AMSGGVDS) and L50 each bind ATP. C119 functions as the Nucleophile in the catalytic mechanism. C119 and C215 are joined by a disulfide. G143 contributes to the ATP binding site. An interaction with tRNA region spans residues 165–167 (KDQ). C215 serves as the catalytic Cysteine persulfide intermediate.

Belongs to the MnmA/TRMU family.

It localises to the cytoplasm. It catalyses the reaction S-sulfanyl-L-cysteinyl-[protein] + uridine(34) in tRNA + AH2 + ATP = 2-thiouridine(34) in tRNA + L-cysteinyl-[protein] + A + AMP + diphosphate + H(+). Catalyzes the 2-thiolation of uridine at the wobble position (U34) of tRNA, leading to the formation of s(2)U34. The chain is tRNA-specific 2-thiouridylase MnmA from Wolbachia pipientis wMel.